A 192-amino-acid polypeptide reads, in one-letter code: Ribosome maturation factor RimM (192 aa).

Residues 99–186 enclose the PRC barrel domain; it reads ADEYHVSELV…RIEIAPPPGL (88 aa).

It belongs to the RimM family. In terms of assembly, binds ribosomal protein uS19.

The protein localises to the cytoplasm. Functionally, an accessory protein needed during the final step in the assembly of 30S ribosomal subunit, possibly for assembly of the head region. Essential for efficient processing of 16S rRNA. May be needed both before and after RbfA during the maturation of 16S rRNA. It has affinity for free ribosomal 30S subunits but not for 70S ribosomes. The protein is Ribosome maturation factor RimM of Microcystis aeruginosa (strain NIES-843 / IAM M-2473).